We begin with the raw amino-acid sequence, 306 residues long: 4-hydroxy-3-methylbut-2-enyl diphosphate reductase (306 aa).

A [4Fe-4S] cluster-binding site is contributed by Cys12. 2 residues coordinate (2E)-4-hydroxy-3-methylbut-2-enyl diphosphate: His41 and His74. His41 and His74 together coordinate dimethylallyl diphosphate. The isopentenyl diphosphate site is built by His41 and His74. Cys96 contacts [4Fe-4S] cluster. His124 provides a ligand contact to (2E)-4-hydroxy-3-methylbut-2-enyl diphosphate. Position 124 (His124) interacts with dimethylallyl diphosphate. Residue His124 coordinates isopentenyl diphosphate. Glu126 acts as the Proton donor in catalysis. Thr164 serves as a coordination point for (2E)-4-hydroxy-3-methylbut-2-enyl diphosphate. Position 194 (Cys194) interacts with [4Fe-4S] cluster. (2E)-4-hydroxy-3-methylbut-2-enyl diphosphate is bound by residues Ser222, Ser223, Asn224, and Ser266. Dimethylallyl diphosphate-binding residues include Ser222, Ser223, Asn224, and Ser266. 4 residues coordinate isopentenyl diphosphate: Ser222, Ser223, Asn224, and Ser266.

It belongs to the IspH family. It depends on [4Fe-4S] cluster as a cofactor.

It carries out the reaction isopentenyl diphosphate + 2 oxidized [2Fe-2S]-[ferredoxin] + H2O = (2E)-4-hydroxy-3-methylbut-2-enyl diphosphate + 2 reduced [2Fe-2S]-[ferredoxin] + 2 H(+). It catalyses the reaction dimethylallyl diphosphate + 2 oxidized [2Fe-2S]-[ferredoxin] + H2O = (2E)-4-hydroxy-3-methylbut-2-enyl diphosphate + 2 reduced [2Fe-2S]-[ferredoxin] + 2 H(+). It participates in isoprenoid biosynthesis; dimethylallyl diphosphate biosynthesis; dimethylallyl diphosphate from (2E)-4-hydroxy-3-methylbutenyl diphosphate: step 1/1. It functions in the pathway isoprenoid biosynthesis; isopentenyl diphosphate biosynthesis via DXP pathway; isopentenyl diphosphate from 1-deoxy-D-xylulose 5-phosphate: step 6/6. Catalyzes the conversion of 1-hydroxy-2-methyl-2-(E)-butenyl 4-diphosphate (HMBPP) into a mixture of isopentenyl diphosphate (IPP) and dimethylallyl diphosphate (DMAPP). Acts in the terminal step of the DOXP/MEP pathway for isoprenoid precursor biosynthesis. The polypeptide is 4-hydroxy-3-methylbut-2-enyl diphosphate reductase (Ruthia magnifica subsp. Calyptogena magnifica).